A 319-amino-acid chain; its full sequence is Polyprenal reductase (319 aa).

Topologically, residues 1-12 (MQLVQLLPPGVS) are cytoplasmic. The chain crosses the membrane as a helical span at residues 13–33 (LLALVWLAVDAAFLTALLLYL). Residues 34-79 (QRGCDSGRSLLCSVFQDLIRYGKTKSGLRRPSWLQWFDIPKRCFWH) are Lumenal-facing. A helical membrane pass occupies residues 80-100 (FYFVSLVWNGFLLWILLHLLL). Residues 101–122 (QSVPVPEWLQAVLQFLCAGSEP) lie on the Cytoplasmic side of the membrane. A helical transmembrane segment spans residues 123-143 (QVLGGELSVVLAFSLLWLHSL). Residues 144-158 (RRLLECLFVSIFSNG) are Lumenal-facing. A helical membrane pass occupies residues 159 to 179 (VIHFVQYCFGLGYYILIGFTI). Over 180 to 195 (LGYCPLDRRTAVSLDD) the chain is Cytoplasmic. The helical transmembrane segment at 196–216 (LLMQGNWYHILGLTLYVWASL) threads the bilayer. The Lumenal segment spans residues 217–266 (HQYTCHCILADLRKSASGAIINLKHAVPTGDWFEKVSCPHYFAELLIYLS). The helical transmembrane segment at 267-287 (IAVVFGLLNTIWWLVVLYVLL) threads the bilayer. Residues 288–319 (SQALAAVLCHEFYHEKFDSYPIHRKAFIPLIF) lie on the Cytoplasmic side of the membrane.

This sequence belongs to the steroid 5-alpha reductase family. Polyprenal reductase subfamily.

It is found in the endoplasmic reticulum membrane. The catalysed reaction is a di-trans,poly-cis-dolichal + NADP(+) = a di-trans,poly-cis-polyprenal + NADPH + H(+). The enzyme catalyses a 3-oxo-5alpha-steroid + NADP(+) = a 3-oxo-Delta(4)-steroid + NADPH + H(+). It carries out the reaction androst-4-ene-3,17-dione + NADPH + H(+) = 5alpha-androstan-3,17-dione + NADP(+). It catalyses the reaction 17beta-hydroxy-5alpha-androstan-3-one + NADP(+) = testosterone + NADPH + H(+). It functions in the pathway protein modification; protein glycosylation. Its function is as follows. Plays a key role in early steps of protein N-linked glycosylation by being involved in the conversion of polyprenol into dolichol. Acts as a polyprenal reductase that mediates the reduction of polyprenal into dolichal in a NADP-dependent mechanism. Dolichols are required for the synthesis of dolichol-linked monosaccharides and the oligosaccharide precursor used for N-glycosylation. Also able to convert testosterone (T) into 5-alpha-dihydrotestosterone (DHT). The polypeptide is Polyprenal reductase (srd5a3) (Xenopus laevis (African clawed frog)).